A 280-amino-acid polypeptide reads, in one-letter code: Fructose-1,6-bisphosphatase class 1 (280 aa).

4 residues coordinate Mg(2+): Glu-64, Asp-83, Leu-85, and Asp-86. Substrate is bound by residues 86 to 89 (DGSS), Tyr-189, and Lys-220. Glu-226 provides a ligand contact to Mg(2+).

This sequence belongs to the FBPase class 1 family. Homotetramer. It depends on Mg(2+) as a cofactor.

Its subcellular location is the cytoplasm. The catalysed reaction is beta-D-fructose 1,6-bisphosphate + H2O = beta-D-fructose 6-phosphate + phosphate. The protein operates within carbohydrate biosynthesis; gluconeogenesis. The polypeptide is Fructose-1,6-bisphosphatase class 1 (Campylobacter jejuni subsp. jejuni serotype O:2 (strain ATCC 700819 / NCTC 11168)).